The chain runs to 223 residues: RNA-free ribonuclease P (223 aa).

The protein belongs to the HARP family.

The catalysed reaction is Endonucleolytic cleavage of RNA, removing 5'-extranucleotides from tRNA precursor.. In terms of biological role, RNA-free RNase P that catalyzes the removal of the 5'-leader sequence from pre-tRNA to produce the mature 5'-terminus. This Methanococcus maripaludis (strain C6 / ATCC BAA-1332) protein is RNA-free ribonuclease P.